Consider the following 100-residue polypeptide: Small ribosomal subunit protein uS14 (100 aa).

Belongs to the universal ribosomal protein uS14 family. Part of the 30S ribosomal subunit. Contacts proteins S3 and S10.

Binds 16S rRNA, required for the assembly of 30S particles and may also be responsible for determining the conformation of the 16S rRNA at the A site. This chain is Small ribosomal subunit protein uS14, found in Gloeothece citriformis (strain PCC 7424) (Cyanothece sp. (strain PCC 7424)).